Consider the following 308-residue polypeptide: Lipoyl synthase (308 aa).

The [4Fe-4S] cluster site is built by Cys-48, Cys-53, Cys-59, Cys-74, Cys-78, Cys-81, and Ser-287. In terms of domain architecture, Radical SAM core spans 60 to 277; the sequence is WSRHTATYLA…RSVGEALGLF (218 aa).

Belongs to the radical SAM superfamily. Lipoyl synthase family. [4Fe-4S] cluster serves as cofactor.

The protein resides in the cytoplasm. It carries out the reaction [[Fe-S] cluster scaffold protein carrying a second [4Fe-4S](2+) cluster] + N(6)-octanoyl-L-lysyl-[protein] + 2 oxidized [2Fe-2S]-[ferredoxin] + 2 S-adenosyl-L-methionine + 4 H(+) = [[Fe-S] cluster scaffold protein] + N(6)-[(R)-dihydrolipoyl]-L-lysyl-[protein] + 4 Fe(3+) + 2 hydrogen sulfide + 2 5'-deoxyadenosine + 2 L-methionine + 2 reduced [2Fe-2S]-[ferredoxin]. The protein operates within protein modification; protein lipoylation via endogenous pathway; protein N(6)-(lipoyl)lysine from octanoyl-[acyl-carrier-protein]: step 2/2. Its function is as follows. Catalyzes the radical-mediated insertion of two sulfur atoms into the C-6 and C-8 positions of the octanoyl moiety bound to the lipoyl domains of lipoate-dependent enzymes, thereby converting the octanoylated domains into lipoylated derivatives. This chain is Lipoyl synthase, found in Chlamydia muridarum (strain MoPn / Nigg).